We begin with the raw amino-acid sequence, 196 residues long: Hibernation-associated plasma protein HP-20 (196 aa).

The first 23 residues, 1-23, serve as a signal peptide directing secretion; sequence MTDVWRLAIFVLMVNVLNDQVSC. Residues 25–63 enclose the Collagen-like domain; it reads GPPGPVGYPGVPGVPGPRGPPGQPGAAGRPGDPGPKGPS. Residues 28-47 are compositionally biased toward pro residues; it reads GPVGYPGVPGVPGPRGPPGQ. Positions 28 to 64 are disordered; that stretch reads GPVGYPGVPGVPGPRGPPGQPGAAGRPGDPGPKGPSV. One can recognise a C1q domain in the interval 67–196; sequence PCRERSAFTV…IYFSGFLISS (130 aa).

As to expression, plasma; synthesized in the liver.

The protein resides in the secreted. Its function is as follows. Plasma proteins HP-20, HP-25, HP-27 and HP-55 form a 140 kDa complex via disulfide bonds in the plasma and are hibernation specific. The protein is Hibernation-associated plasma protein HP-20 of Tamias sibiricus (Siberian chipmunk).